Reading from the N-terminus, the 917-residue chain is Isoleucine--tRNA ligase (917 aa).

The 'HIGH' region motif lies at 57–67 (PYANGNLHMGH). Residue glutamate 554 participates in L-isoleucyl-5'-AMP binding. A 'KMSKS' region motif is present at residues 595 to 599 (KMSKS). Position 598 (lysine 598) interacts with ATP. Positions 886, 889, 906, and 909 each coordinate Zn(2+).

Belongs to the class-I aminoacyl-tRNA synthetase family. IleS type 1 subfamily. As to quaternary structure, monomer. Requires Zn(2+) as cofactor.

Its subcellular location is the cytoplasm. It carries out the reaction tRNA(Ile) + L-isoleucine + ATP = L-isoleucyl-tRNA(Ile) + AMP + diphosphate. Catalyzes the attachment of isoleucine to tRNA(Ile). As IleRS can inadvertently accommodate and process structurally similar amino acids such as valine, to avoid such errors it has two additional distinct tRNA(Ile)-dependent editing activities. One activity is designated as 'pretransfer' editing and involves the hydrolysis of activated Val-AMP. The other activity is designated 'posttransfer' editing and involves deacylation of mischarged Val-tRNA(Ile). This is Isoleucine--tRNA ligase (ileS) from Staphylococcus aureus (strain MSSA476).